Consider the following 918-residue polypeptide: Rap guanine nucleotide exchange factor 3 (918 aa).

The residue at position 79 (Ser-79) is a Phosphoserine. Residues 110 to 186 (ATYPTLIRDR…RDAQFYRFPG (77 aa)) form the DEP domain. The interval 218-242 (TVALRKPPGQRTDEELDLIFEELLH) is interaction with PDE3B. Residues 311–314 (GQLA) and 321–322 (RA) contribute to the 3',5'-cyclic AMP site. Residues 369-388 (TSQGAGPSRPPTPGRNRYTV) are disordered. In terms of domain architecture, N-terminal Ras-GEF spans 384–521 (NRYTVMSGTP…EQYPERRRHH (138 aa)). Residues 398–422 (ELLLEAMRPDSSAHDPTETFLSDFL) are interaction with PDE3B. Residues Ser-531 and Ser-859 each carry the phosphoserine modification. Positions 665-884 (SAKDLAGQLT…SRISTCSEQS (220 aa)) constitute a Ras-GEF domain.

In terms of assembly, interacts with PDE3B and PIK3R6; form a signaling complex that regulates phosphatidylinositol 3-kinase gamma in angiogenesis.

Its subcellular location is the cytoplasm. The protein resides in the membrane. Its function is as follows. Guanine nucleotide exchange factor (GEF) for RAP1A and RAP2A small GTPases that is activated by binding cAMP. Through simultaneous binding of PDE3B to RAPGEF3 and PIK3R6 is assembled in a signaling complex in which it activates the PI3K gamma complex and which is involved in angiogenesis. Plays a role in the modulation of the cAMP-induced dynamic control of endothelial barrier function through a pathway that is independent on Rho-mediated signaling. Required for the actin rearrangement at cell-cell junctions, such as stress fibers and junctional actin. This chain is Rap guanine nucleotide exchange factor 3 (Rapgef3), found in Mus musculus (Mouse).